The primary structure comprises 141 residues: Hemoglobin subunit alpha-D (141 aa).

The region spanning 1-141 (MLTEDEKQLI…VSAVLAEKYR (141 aa)) is the Globin domain. 2 residues coordinate heme b: H58 and H87.

The protein belongs to the globin family. As to quaternary structure, heterotetramer of two alpha-D chains and two beta chains. Red blood cells.

In terms of biological role, involved in oxygen transport from the lung to the various peripheral tissues. The polypeptide is Hemoglobin subunit alpha-D (HBAD) (Chelonoidis carbonarius (Red-footed tortoise)).